We begin with the raw amino-acid sequence, 328 residues long: Probable D,D-dipeptide transport ATP-binding protein DdpD (328 aa).

Positions 6 to 257 (LDIQQLHLSF…PRHPYTIGLL (252 aa)) constitute an ABC transporter domain. Residue 42–49 (GESGSGKS) coordinates ATP.

It belongs to the ABC transporter superfamily. The complex is composed of two ATP-binding proteins (DdpD and DdpF), two transmembrane proteins (DdpB and DdpC) and a solute-binding protein (DdpA).

It localises to the cell inner membrane. In terms of biological role, part of the ABC transporter complex DdpABCDF, which is probably involved in D,D-dipeptide transport. Probably responsible for energy coupling to the transport system. This chain is Probable D,D-dipeptide transport ATP-binding protein DdpD, found in Escherichia coli (strain K12).